Here is a 267-residue protein sequence, read N- to C-terminus: Hydroxyethylthiazole kinase (267 aa).

Position 44 (methionine 44) interacts with substrate. Residues arginine 120 and threonine 165 each contribute to the ATP site. Glycine 192 is a binding site for substrate.

It belongs to the Thz kinase family. Mg(2+) is required as a cofactor.

The enzyme catalyses 5-(2-hydroxyethyl)-4-methylthiazole + ATP = 4-methyl-5-(2-phosphooxyethyl)-thiazole + ADP + H(+). The protein operates within cofactor biosynthesis; thiamine diphosphate biosynthesis; 4-methyl-5-(2-phosphoethyl)-thiazole from 5-(2-hydroxyethyl)-4-methylthiazole: step 1/1. Catalyzes the phosphorylation of the hydroxyl group of 4-methyl-5-beta-hydroxyethylthiazole (THZ). This chain is Hydroxyethylthiazole kinase, found in Carboxydothermus hydrogenoformans (strain ATCC BAA-161 / DSM 6008 / Z-2901).